The chain runs to 181 residues: HGPRTase-like protein 2 (181 aa).

The protein belongs to the purine/pyrimidine phosphoribosyltransferase family. Archaeal HPRT subfamily.

In terms of biological role, may catalyze a purine salvage reaction, the substrate is unknown. The polypeptide is HGPRTase-like protein 2 (Haloquadratum walsbyi (strain DSM 16854 / JCM 12705 / C23)).